A 518-amino-acid polypeptide reads, in one-letter code: MDTSHSDTVLIIDFGSQVTQLIARRVRAMGVYSEIVPFQSALGGINRIKPKAVILSGSPYSTLDNGSPRAPIEVFEAGIPVLGICYGQQVMCVQLGGKVEAGHEREFGRAFLEIKEESALFDGVWEKGSSQQVWMSHGDRVTALPEGFCVIGTSKGAPYAAISDEKRNFYAVQFHPEVVHTPDGEKLLQNFVCKISGIKNNWSMAAYRDQAIAAIREKVGKNRVICGLSGGVDSSVTAVLLHEAIGDQLTCIFVDHGLIRKNEAEEVLKLFRDNYNIELIHVNAADMFINALEGETDPEKKRKTIGRLFIEVFEEETKKIGGAKFLAQGTLYPDVIESVSAIGEAITIKSHHNVGGLPERMNMKLVEPLRELFKDDVRSLGRELGLPEEFIKRHPFPGPGLAIRCPGAVTREKIEILREADAIYLDEIRKAGLYDKIWQAFAILLPVQTVGVMGDGRTYEFVCALRAVTSVDGMTADFYPHDMDFLSRTAARIINEVRGINRVVYDITSKPPGTIEWE.

In terms of domain architecture, Glutamine amidotransferase type-1 spans Thr8–Asn201. Cys85 functions as the Nucleophile in the catalytic mechanism. Active-site residues include His175 and Glu177. The GMPS ATP-PPase domain occupies Trp202–Arg393. Ser229–Ser235 lines the ATP pocket.

As to quaternary structure, homodimer.

It carries out the reaction XMP + L-glutamine + ATP + H2O = GMP + L-glutamate + AMP + diphosphate + 2 H(+). Its pathway is purine metabolism; GMP biosynthesis; GMP from XMP (L-Gln route): step 1/1. Functionally, catalyzes the synthesis of GMP from XMP. In Bartonella bacilliformis (strain ATCC 35685 / KC583 / Herrer 020/F12,63), this protein is GMP synthase [glutamine-hydrolyzing].